Here is an 88-residue protein sequence, read N- to C-terminus: Small ribosomal subunit protein bS20 (88 aa).

Disordered stretches follow at residues 1–23 (MANT…VNKA) and 65–88 (GVMH…SLSA).

Belongs to the bacterial ribosomal protein bS20 family.

Functionally, binds directly to 16S ribosomal RNA. In Rhizobium meliloti (strain 1021) (Ensifer meliloti), this protein is Small ribosomal subunit protein bS20.